Consider the following 275-residue polypeptide: NH(3)-dependent NAD(+) synthetase (275 aa).

ATP is bound at residue 46-53 (GISGGQDS). Residue Asp-52 coordinates Mg(2+). Arg-140 contributes to the deamido-NAD(+) binding site. Thr-160 is an ATP binding site. Mg(2+) is bound at residue Glu-165. 2 residues coordinate deamido-NAD(+): Lys-173 and Asp-180. Positions 189 and 211 each coordinate ATP. 260 to 261 (HK) contributes to the deamido-NAD(+) binding site.

Belongs to the NAD synthetase family. As to quaternary structure, homodimer.

The enzyme catalyses deamido-NAD(+) + NH4(+) + ATP = AMP + diphosphate + NAD(+) + H(+). It participates in cofactor biosynthesis; NAD(+) biosynthesis; NAD(+) from deamido-NAD(+) (ammonia route): step 1/1. Catalyzes the ATP-dependent amidation of deamido-NAD to form NAD. Uses ammonia as a nitrogen source. The polypeptide is NH(3)-dependent NAD(+) synthetase (Shigella flexneri serotype 5b (strain 8401)).